Consider the following 174-residue polypeptide: RxLR effector protein 207 (174 aa).

Residues 1 to 20 (MSKVFLLLVLSVFALVSCDA) form the signal peptide. The short motif at 46 to 62 (RMLRAQEEPTNAADEER) is the RxLR-dEER element. Positions 82–99 (VTNSKLVQSMNNKLASLT) are disordered.

It belongs to the RxLR effector family. As to quaternary structure, interacts with Nicotiana benthamiana ACD11, BPA1 (binding partner of ACD11), as well as BPA-like proteins BPL1, BPL2, BPL3 and BPL4.

It is found in the secreted. It localises to the host cell membrane. Secreted effector that activates ROS-mediated cell death in plant host and is essential for virulence. Plays a role in the transition from the biotrophic to necrotrophic stage. Associates with and promotes the degradation of Nicotiana benthamiana BPA1, BPL1, BPL2, and BPL4 to disrupt ACD11 stabilization in a 26S proteasome-dependent manner. The polypeptide is RxLR effector protein 207 (Phytophthora capsici).